The following is a 187-amino-acid chain: Cytokinin riboside 5'-monophosphate phosphoribohydrolase (187 aa).

Substrate contacts are provided by residues E80, 98 to 99, 115 to 121, and T127; these read RK and GVGTLDE.

The protein belongs to the LOG family.

The catalysed reaction is N(6)-(dimethylallyl)adenosine 5'-phosphate + H2O = N(6)-dimethylallyladenine + D-ribose 5-phosphate. It catalyses the reaction 9-ribosyl-trans-zeatin 5'-phosphate + H2O = trans-zeatin + D-ribose 5-phosphate. Its function is as follows. Catalyzes the hydrolytic removal of ribose 5'-monophosphate from nitrogen N6-modified adenosines, the final step of bioactive cytokinin synthesis. In Mycobacterium marinum (strain ATCC BAA-535 / M), this protein is Cytokinin riboside 5'-monophosphate phosphoribohydrolase.